The primary structure comprises 266 residues: Tryptophan synthase alpha chain (266 aa).

Catalysis depends on proton acceptor residues glutamate 47 and aspartate 58.

It belongs to the TrpA family. In terms of assembly, tetramer of two alpha and two beta chains.

Its subcellular location is the plastid. The protein localises to the chloroplast. It catalyses the reaction (1S,2R)-1-C-(indol-3-yl)glycerol 3-phosphate + L-serine = D-glyceraldehyde 3-phosphate + L-tryptophan + H2O. It participates in amino-acid biosynthesis; L-tryptophan biosynthesis; L-tryptophan from chorismate: step 5/5. In terms of biological role, the alpha subunit is responsible for the aldol cleavage of indoleglycerol phosphate to indole and glyceraldehyde 3-phosphate. The protein is Tryptophan synthase alpha chain of Cyanidium caldarium (Red alga).